The sequence spans 79 residues: CDC42 small effector protein 1 (79 aa).

Residues Cys10 and Cys11 are each lipidated (S-palmitoyl cysteine). A CRIB domain is found at Ile30–Gly43. The segment at Gly48 to Leu79 is disordered. Positions Met63–Pro72 are enriched in basic and acidic residues.

It belongs to the CDC42SE/SPEC family. Interacts with CDC42 (in GTP-bound form). Interacts weakly with RAC1 and not at all with RHOA.

Its subcellular location is the cytoplasm. The protein localises to the cytoskeleton. It localises to the cell membrane. Its function is as follows. Probably involved in the organization of the actin cytoskeleton by acting downstream of CDC42, inducing actin filament assembly. Alters CDC42-induced cell shape changes. In activated T-cells, may play a role in CDC42-mediated F-actin accumulation at the immunological synapse. May play a role in early contractile events in phagocytosis in macrophages. This is CDC42 small effector protein 1 (CDC42SE1) from Pongo abelii (Sumatran orangutan).